A 572-amino-acid chain; its full sequence is Proline--tRNA ligase (572 aa).

Belongs to the class-II aminoacyl-tRNA synthetase family. ProS type 1 subfamily. In terms of assembly, homodimer.

The protein resides in the cytoplasm. It catalyses the reaction tRNA(Pro) + L-proline + ATP = L-prolyl-tRNA(Pro) + AMP + diphosphate. In terms of biological role, catalyzes the attachment of proline to tRNA(Pro) in a two-step reaction: proline is first activated by ATP to form Pro-AMP and then transferred to the acceptor end of tRNA(Pro). As ProRS can inadvertently accommodate and process non-cognate amino acids such as alanine and cysteine, to avoid such errors it has two additional distinct editing activities against alanine. One activity is designated as 'pretransfer' editing and involves the tRNA(Pro)-independent hydrolysis of activated Ala-AMP. The other activity is designated 'posttransfer' editing and involves deacylation of mischarged Ala-tRNA(Pro). The misacylated Cys-tRNA(Pro) is not edited by ProRS. This chain is Proline--tRNA ligase, found in Escherichia coli O127:H6 (strain E2348/69 / EPEC).